Reading from the N-terminus, the 432-residue chain is Aspartate aminotransferase (432 aa).

Residue 45-46 (RG) participates in substrate binding. A pyridoxal 5'-phosphate-binding site is contributed by 109–111 (SSL). 148–150 (YDR) serves as a coordination point for substrate. Pyridoxal 5'-phosphate is bound by residues asparagine 197, tyrosine 229, and 262 to 265 (STSK). Arginine 400 is a substrate binding site.

Belongs to the class-I pyridoxal-phosphate-dependent aminotransferase family. In terms of assembly, homodimer. It depends on pyridoxal 5'-phosphate as a cofactor.

It catalyses the reaction L-aspartate + 2-oxoglutarate = oxaloacetate + L-glutamate. The protein is Aspartate aminotransferase of Corynebacterium glutamicum (strain ATCC 13032 / DSM 20300 / JCM 1318 / BCRC 11384 / CCUG 27702 / LMG 3730 / NBRC 12168 / NCIMB 10025 / NRRL B-2784 / 534).